A 769-amino-acid chain; its full sequence is Serine protease HtrA-like (769 aa).

Basic residues predominate over residues methionine 1–glutamate 20. 2 disordered regions span residues methionine 1–asparagine 287 and glutamate 324–alanine 390. 2 stretches are compositionally biased toward basic and acidic residues: residues phenylalanine 21 to lysine 64 and leucine 71 to lysine 108. Residues tyrosine 126–lysine 137 show a composition bias toward polar residues. The segment covering serine 138–serine 186 has biased composition (basic and acidic residues). A compositionally biased stretch (polar residues) spans glutamine 247 to serine 262. Residues glutamine 264 to asparagine 287 show a composition bias toward basic and acidic residues. The span at alanine 331–histidine 347 shows a compositional bias: polar residues. A compositionally biased stretch (basic and acidic residues) spans arginine 348–asparagine 364. A compositionally biased stretch (polar residues) spans glycine 365–alanine 390. Residues leucine 410–valine 430 traverse the membrane as a helical segment. Residues histidine 504, aspartate 534, and serine 619 each act as charge relay system in the active site. Positions isoleucine 680–aspartate 733 constitute a PDZ domain.

This sequence belongs to the peptidase S1C family.

Its subcellular location is the cell membrane. The chain is Serine protease HtrA-like from Staphylococcus aureus (strain N315).